Here is a 258-residue protein sequence, read N- to C-terminus: UPF0246 protein IL2146 (258 aa).

The protein belongs to the UPF0246 family.

This chain is UPF0246 protein IL2146, found in Idiomarina loihiensis (strain ATCC BAA-735 / DSM 15497 / L2-TR).